The following is a 482-amino-acid chain: MDGAVMEGPLFLQSQRFGTKRWRKTWAVLYPASPHGVARLEFFDHKGSSSRGGRGGSRRLDCKMIRLAECVSVVPVTVESPPEPGAVAFRLDTAQRSHLLAADAVSSTAWVQTLCRTAFPKGGWALAQTENQPKFSALEMLENSLYSPTWEGSQFWVTSQKTEASERCGLQGSYILRVEAEKLTLLTLGAQSQILEPLLFWPYTLLRRYGRDKVMFSFEAGRRCPSGPGTFTFQTSQGNDIFQAVEAAIQQQKAQGKVGQAQDILRTDSHDGETEGKTVPPPVPQDPLGSPPALYAEPLDSLRIPPGPSQDSVYSDPLGSTPAGAGEGVHSKKPLYWDLYGHVQQQLLKTKLTDSKEDPIYDEPEGLAPAPPRGLYDLPQEPRDAWWCQARLKEEGYELPYNPATDDYAVPPPRSPKPAPAPKPQGLILPESGTTRGSGSKGFSSDTALYSQVQKSGTSGAWDCGLSKVGNDRAGVKSEGST.

Position 1 is an N-acetylmethionine (Met1). A PH domain is found at 4–119; that stretch reads AVMEGPLFLQ…WVQTLCRTAF (116 aa). At Ser48 the chain carries Phosphoserine. The region spanning 151 to 259 is the IRS-type PTB domain; that stretch reads EGSQFWVTSQ…QQQKAQGKVG (109 aa). Residues Ser269 and Ser290 each carry the phosphoserine modification. Residues 269–328 form a disordered region; sequence SHDGETEGKTVPPPVPQDPLGSPPALYAEPLDSLRIPPGPSQDSVYSDPLGSTPAGAGEG. Residues Tyr295, Tyr336, Tyr340, Tyr361, and Tyr376 each carry the phosphotyrosine modification. The tract at residues 353 to 373 is disordered; that stretch reads TDSKEDPIYDEPEGLAPAPPR. Tyr397 bears the Phosphotyrosine; by INSR mark. The tract at residues 398–482 is disordered; it reads ELPYNPATDD…RAGVKSEGST (85 aa). Tyr408 is subject to Phosphotyrosine. Pro residues predominate over residues 410-423; it reads VPPPRSPKPAPAPK. Ser415 bears the Phosphoserine mark. Over residues 432 to 459 the composition is skewed to polar residues; the sequence is SGTTRGSGSKGFSSDTALYSQVQKSGTS. A Phosphotyrosine modification is found at Tyr450.

This sequence belongs to the DOK family. Type A subfamily. As to quaternary structure, interacts with RasGAP, INPP5D/SHIP1 and ABL1. Interacts directly with phosphorylated ITGB3. Interacts with SRMS (via the SH2 and SH3 domains). In terms of processing, constitutively tyrosine-phosphorylated. Phosphorylated by TEC. Phosphorylated on tyrosine residues by the insulin receptor kinase. Results in the negative regulation of the insulin signaling pathway. Phosphorylated by LYN. Phosphorylated on tyrosine residues by SRMS. In terms of tissue distribution, expressed in lung, spleen, skeletal muscle and kidney.

The protein localises to the cytoplasm. Its subcellular location is the nucleus. Functionally, DOK proteins are enzymatically inert adaptor or scaffolding proteins. They provide a docking platform for the assembly of multimolecular signaling complexes. DOK1 appears to be a negative regulator of the insulin signaling pathway. Modulates integrin activation by competing with talin for the same binding site on ITGB3. The chain is Docking protein 1 (Dok1) from Mus musculus (Mouse).